Consider the following 94-residue polypeptide: Cell division topological specificity factor (94 aa).

This sequence belongs to the MinE family.

In terms of biological role, prevents the cell division inhibition by proteins MinC and MinD at internal division sites while permitting inhibition at polar sites. This ensures cell division at the proper site by restricting the formation of a division septum at the midpoint of the long axis of the cell. In Beijerinckia indica subsp. indica (strain ATCC 9039 / DSM 1715 / NCIMB 8712), this protein is Cell division topological specificity factor.